The chain runs to 468 residues: Glutamate--tRNA ligase (468 aa).

A 'HIGH' region motif is present at residues 9–19 (PSPTGYLHVGG). Zn(2+) contacts are provided by Cys98, Cys100, Cys125, and Asp127. Positions 235-239 (KLSKR) match the 'KMSKS' region motif. ATP is bound at residue Lys238.

It belongs to the class-I aminoacyl-tRNA synthetase family. Glutamate--tRNA ligase type 1 subfamily. In terms of assembly, monomer. Requires Zn(2+) as cofactor.

It is found in the cytoplasm. It carries out the reaction tRNA(Glu) + L-glutamate + ATP = L-glutamyl-tRNA(Glu) + AMP + diphosphate. In terms of biological role, catalyzes the attachment of glutamate to tRNA(Glu) in a two-step reaction: glutamate is first activated by ATP to form Glu-AMP and then transferred to the acceptor end of tRNA(Glu). The polypeptide is Glutamate--tRNA ligase (Idiomarina loihiensis (strain ATCC BAA-735 / DSM 15497 / L2-TR)).